An 876-amino-acid polypeptide reads, in one-letter code: Valine--tRNA ligase (876 aa).

Residues 44-54 (PNVTGKLHLGH) carry the 'HIGH' region motif. Residues 520–524 (KMSKS) carry the 'KMSKS' region motif. K523 is an ATP binding site. Residues 805-876 (LEGLIDMDKE…VKARIEQLKA (72 aa)) adopt a coiled-coil conformation.

It belongs to the class-I aminoacyl-tRNA synthetase family. ValS type 1 subfamily. Monomer.

Its subcellular location is the cytoplasm. It catalyses the reaction tRNA(Val) + L-valine + ATP = L-valyl-tRNA(Val) + AMP + diphosphate. Its function is as follows. Catalyzes the attachment of valine to tRNA(Val). As ValRS can inadvertently accommodate and process structurally similar amino acids such as threonine, to avoid such errors, it has a 'posttransfer' editing activity that hydrolyzes mischarged Thr-tRNA(Val) in a tRNA-dependent manner. This Staphylococcus aureus (strain MRSA252) protein is Valine--tRNA ligase.